We begin with the raw amino-acid sequence, 37 residues long: NAD-reducing hydrogenase HoxS subunit alpha (37 aa).

Belongs to the complex I 51 kDa subunit family. Tetramer of an alpha and a gamma subunits (flavin-containing dimer), and a delta and a nickel-containing beta subunits (hydrogenase dimer). It depends on FMN as a cofactor. Requires [4Fe-4S] cluster as cofactor.

It is found in the cytoplasm. The catalysed reaction is H2 + NAD(+) = NADH + H(+). In terms of biological role, subunits alpha and gamma of HoxS constitute an NADH--oxidoreductase. This chain is NAD-reducing hydrogenase HoxS subunit alpha (hoxF), found in Rhodococcus opacus (Nocardia opaca).